Reading from the N-terminus, the 99-residue chain is Malonate decarboxylase acyl carrier protein (99 aa).

Serine 25 is subject to O-(phosphoribosyl dephospho-coenzyme A)serine.

Belongs to the MdcC family. Covalently binds the prosthetic group of malonate decarboxylase.

It localises to the cytoplasm. Functionally, subunit of malonate decarboxylase, it is an acyl carrier protein to which acetyl and malonyl thioester residues are bound via a 2'-(5''-phosphoribosyl)-3'-dephospho-CoA prosthetic group and turn over during the catalytic mechanism. The polypeptide is Malonate decarboxylase acyl carrier protein (Pseudomonas paraeruginosa (strain DSM 24068 / PA7) (Pseudomonas aeruginosa (strain PA7))).